The sequence spans 188 residues: Molybdopterin synthase catalytic subunit (188 aa).

Positions 1–14 (MTTQPPQDQTSTTP) are enriched in low complexity. Positions 1-23 (MTTQPPQDQTSTTPSLPPHLDPT) are disordered. Substrate is bound by residues 134 to 135 (HR), lysine 150, and 157 to 159 (KRE).

It belongs to the MoaE family. MOCS2B subfamily. Heterotetramer; composed of 2 small (MOCS2A) and 2 large (MOCS2B) subunits.

The protein localises to the cytoplasm. The enzyme catalyses 2 [molybdopterin-synthase sulfur-carrier protein]-C-terminal-Gly-aminoethanethioate + cyclic pyranopterin phosphate + H2O = molybdopterin + 2 [molybdopterin-synthase sulfur-carrier protein]-C-terminal Gly-Gly + 2 H(+). The protein operates within cofactor biosynthesis; molybdopterin biosynthesis. Its function is as follows. Catalytic subunit of the molybdopterin synthase complex, a complex that catalyzes the conversion of precursor Z into molybdopterin. Acts by mediating the incorporation of 2 sulfur atoms from thiocarboxylated MOCS2A into precursor Z to generate a dithiolene group. The chain is Molybdopterin synthase catalytic subunit from Neosartorya fischeri (strain ATCC 1020 / DSM 3700 / CBS 544.65 / FGSC A1164 / JCM 1740 / NRRL 181 / WB 181) (Aspergillus fischerianus).